The sequence spans 279 residues: Shikimate dehydrogenase (NADP(+)) (279 aa).

Shikimate is bound by residues 19 to 21 (SRS) and Thr66. Lys70 serves as the catalytic Proton acceptor. 2 residues coordinate shikimate: Asn91 and Asp106. NADP(+) contacts are provided by residues 129 to 133 (GAGGA) and Phe222. Tyr224 is a binding site for shikimate. NADP(+) is bound at residue Gly243.

It belongs to the shikimate dehydrogenase family. Homodimer.

The catalysed reaction is shikimate + NADP(+) = 3-dehydroshikimate + NADPH + H(+). The protein operates within metabolic intermediate biosynthesis; chorismate biosynthesis; chorismate from D-erythrose 4-phosphate and phosphoenolpyruvate: step 4/7. Its function is as follows. Involved in the biosynthesis of the chorismate, which leads to the biosynthesis of aromatic amino acids. Catalyzes the reversible NADPH linked reduction of 3-dehydroshikimate (DHSA) to yield shikimate (SA). This is Shikimate dehydrogenase (NADP(+)) from Anaeromyxobacter sp. (strain Fw109-5).